A 375-amino-acid polypeptide reads, in one-letter code: 23S rRNA (uracil(747)-C(5))-methyltransferase RlmC (375 aa).

[4Fe-4S] cluster-binding residues include Cys3, Cys11, Cys14, and Cys87. S-adenosyl-L-methionine contacts are provided by Gln212, Phe241, Glu262, and Asn307. Cys334 (nucleophile) is an active-site residue.

Belongs to the class I-like SAM-binding methyltransferase superfamily. RNA M5U methyltransferase family. RlmC subfamily.

It catalyses the reaction uridine(747) in 23S rRNA + S-adenosyl-L-methionine = 5-methyluridine(747) in 23S rRNA + S-adenosyl-L-homocysteine + H(+). In terms of biological role, catalyzes the formation of 5-methyl-uridine at position 747 (m5U747) in 23S rRNA. In Escherichia coli O139:H28 (strain E24377A / ETEC), this protein is 23S rRNA (uracil(747)-C(5))-methyltransferase RlmC.